Consider the following 1252-residue polypeptide: Guanine nucleotide exchange factor SDC25 (1252 aa).

Residues 26–97 (QPIDVVECTY…PPSFTRSILN (72 aa)) enclose the SH3 domain. Disordered regions lie at residues 409-454 (IPAS…DTIW) and 623-648 (LNLDNAKDKKNGSQNTDIQEEEDEYE). The span at 416-428 (TSCSSETSHHSPS) shows a compositional bias: low complexity. Positions 782–914 (SNNRIKGGSK…LLKEVNQKFK (133 aa)) constitute an N-terminal Ras-GEF domain. Residues 952–1199 (DPVLFATQLT…YQLSLIIEPK (248 aa)) enclose the Ras-GEF domain. The segment at 1201–1252 (RKKVVPNSNSNNKSQEKSRDDQTDEGKTSTKKDRFSKFQLHKTKKKAPKVSK) is disordered. Basic and acidic residues predominate over residues 1214–1236 (SQEKSRDDQTDEGKTSTKKDRFS). Residues 1239–1252 (QLHKTKKKAPKVSK) show a composition bias toward basic residues.

Its function is as follows. Promotes the exchange of Ras-bound GDP by GTP. The polypeptide is Guanine nucleotide exchange factor SDC25 (SDC25) (Saccharomyces cerevisiae (strain RM11-1a) (Baker's yeast)).